The following is a 407-amino-acid chain: Endo-1,4-beta-xylanase (407 aa).

The signal sequence occupies residues M1 to A28. Residues A42 to H406 form the GH10 domain. E187 acts as the Proton donor in catalysis. The active-site Nucleophile is the E293.

Belongs to the glycosyl hydrolase 10 (cellulase F) family.

It is found in the secreted. The enzyme catalyses Endohydrolysis of (1-&gt;4)-beta-D-xylosidic linkages in xylans.. Its pathway is glycan degradation; xylan degradation. In Geobacillus stearothermophilus (Bacillus stearothermophilus), this protein is Endo-1,4-beta-xylanase.